The chain runs to 390 residues: Odorant receptor 85b (390 aa).

Topologically, residues 1–30 (MEKLMKYASFFYTAVGIRPYTNGEESKMNK) are cytoplasmic. A helical transmembrane segment spans residues 31–51 (LIFHIVFWSNVINLSFVGLFE). Residues 52–66 (SIYVYSAFMDNKFLE) lie on the Extracellular side of the membrane. A helical membrane pass occupies residues 67–87 (AVTALSYIGFVTVGMSKMFFI). Residues 88–126 (RWKKTAITELINELKEIYPNGLIREERYNLPMYLGTCSR) lie on the Cytoplasmic side of the membrane. A helical transmembrane segment spans residues 127–147 (ISLIYSLLYSVLIWTFNLFCV). The Extracellular segment spans residues 148 to 200 (MEYWVYDKWLNIRVVGKQLPYLMYIPWKWQDNWSYYPLLFSQNFAGYTSAAGQ). Residue Asn-179 is glycosylated (N-linked (GlcNAc...) asparagine). A helical membrane pass occupies residues 201–221 (ISTDVLLCAVATQLVMHFDFL). Topologically, residues 222 to 260 (SNSMERHELSGDWKKDSRFLVDIVRYHERILRLSDAVND) are cytoplasmic. Residues 261 to 281 (IFGIPLLLNFMVSSFVICFVG) traverse the membrane as a helical segment. At 282 to 291 (FQMTVGVPPD) the chain is on the extracellular side. A helical transmembrane segment spans residues 292–312 (IVVKLFLFLVSSMSQVYLICH). At 313–360 (YGQLVADASYGFSVATYNQKWYKADVRYKRALVIIIARSQKVTFLKAT) the chain is on the cytoplasmic side. Residues 361–381 (IFLDITRSTMTDLLQISYKFF) form a helical membrane-spanning segment. At 382–390 (ALLRTMYTQ) the chain is on the extracellular side.

It belongs to the insect chemoreceptor superfamily. Heteromeric odorant receptor channel (TC 1.A.69) family. Or49a subfamily. As to quaternary structure, interacts with Orco. Complexes exist early in the endomembrane system in olfactory sensory neurons (OSNs), coupling these complexes to the conserved ciliary trafficking pathway. As to expression, expressed in olfactory sensory neurons in the antenna.

It is found in the cell membrane. Functionally, odorant receptor which mediates acceptance or avoidance behavior, depending on its substrates. The odorant receptor repertoire encodes a large collection of odor stimuli that vary widely in identity, intensity, and duration. Forms a complex with Orco to form odorant-sensing units, providing sensitive and prolonged odorant signaling and calcium permeability. Involved in the behavioral responses to 2-heptanone, amyl acetate, and butyl acetate. This Drosophila melanogaster (Fruit fly) protein is Odorant receptor 85b (Or85b).